The sequence spans 468 residues: Glutamate--tRNA ligase (468 aa).

The 'HIGH' region motif lies at 8–18 (PSPTGFLHVGG). Cys-97, Cys-99, Cys-124, and Asp-126 together coordinate Zn(2+). Residues 236–240 (KLSKR) carry the 'KMSKS' region motif. Lys-239 is an ATP binding site.

The protein belongs to the class-I aminoacyl-tRNA synthetase family. Glutamate--tRNA ligase type 1 subfamily. Monomer. Zn(2+) serves as cofactor.

It is found in the cytoplasm. The catalysed reaction is tRNA(Glu) + L-glutamate + ATP = L-glutamyl-tRNA(Glu) + AMP + diphosphate. Its function is as follows. Catalyzes the attachment of glutamate to tRNA(Glu) in a two-step reaction: glutamate is first activated by ATP to form Glu-AMP and then transferred to the acceptor end of tRNA(Glu). In Francisella tularensis subsp. mediasiatica (strain FSC147), this protein is Glutamate--tRNA ligase.